A 324-amino-acid polypeptide reads, in one-letter code: ATP-dependent 6-phosphofructokinase (324 aa).

Glycine 11 contacts ATP. An ADP-binding site is contributed by 21 to 25; it reads RAVVR. Residues 72-73 and 102-105 each bind ATP; these read RE and GNGS. Residue asparagine 103 coordinates Mg(2+). Residue 126–128 participates in substrate binding; the sequence is TID. Aspartate 128 acts as the Proton acceptor in catalysis. ADP is bound at residue arginine 155. Substrate-binding positions include arginine 163 and 170-172; that span reads MGR. ADP contacts are provided by residues 186-188, arginine 212, and 214-216; these read GAD and KKF. Substrate is bound by residues glutamate 223, arginine 248, and 254 to 257; that span reads YIQR.

Belongs to the phosphofructokinase type A (PFKA) family. ATP-dependent PFK group I subfamily. Prokaryotic clade 'B1' sub-subfamily. In terms of assembly, homotetramer. Mg(2+) is required as a cofactor.

Its subcellular location is the cytoplasm. The enzyme catalyses beta-D-fructose 6-phosphate + ATP = beta-D-fructose 1,6-bisphosphate + ADP + H(+). It functions in the pathway carbohydrate degradation; glycolysis; D-glyceraldehyde 3-phosphate and glycerone phosphate from D-glucose: step 3/4. Allosterically activated by ADP and other diphosphonucleosides, and allosterically inhibited by phosphoenolpyruvate. Catalyzes the phosphorylation of D-fructose 6-phosphate to fructose 1,6-bisphosphate by ATP, the first committing step of glycolysis. This is ATP-dependent 6-phosphofructokinase from Persephonella marina (strain DSM 14350 / EX-H1).